Consider the following 156-residue polypeptide: Small ribosomal subunit protein bS6 (156 aa).

A disordered region spans residues 98 to 156 (GHDFRDQRSHHGQAGEFRKREPQQKSKEQSEFSKEKKSFSKSVTKKTVVSKPKETKEEK). Over residues 113–135 (EFRKREPQQKSKEQSEFSKEKKS) the composition is skewed to basic and acidic residues. Residues 137–147 (SKSVTKKTVVS) are compositionally biased toward low complexity.

It belongs to the bacterial ribosomal protein bS6 family.

Its function is as follows. Binds together with bS18 to 16S ribosomal RNA. This is Small ribosomal subunit protein bS6 from Mycoplasmopsis synoviae (strain 53) (Mycoplasma synoviae).